The following is a 274-amino-acid chain: Thiamine kinase (274 aa).

The protein belongs to the thiamine kinase family.

The enzyme catalyses thiamine + ATP = thiamine phosphate + ADP + H(+). It participates in cofactor biosynthesis; thiamine diphosphate biosynthesis; thiamine phosphate from thiamine: step 1/1. In terms of biological role, catalyzes the ATP-dependent phosphorylation of thiamine to thiamine phosphate. Is involved in thiamine salvage. In Shigella flexneri serotype 5b (strain 8401), this protein is Thiamine kinase.